The sequence spans 448 residues: Adenylosuccinate synthetase (448 aa).

Residues Gly36–Lys42 and Gly64–Thr66 contribute to the GTP site. Asp37 functions as the Proton acceptor in the catalytic mechanism. The Mg(2+) site is built by Asp37 and Gly64. Residues Asp37 to Lys40, Asn62 to His65, Thr154, Arg168, Asn246, Thr261, and Arg325 contribute to the IMP site. His65 acts as the Proton donor in catalysis. Val321–Arg327 lines the substrate pocket. Residues Arg327, Lys353–Asp355, and Gly436–Gly438 each bind GTP.

The protein belongs to the adenylosuccinate synthetase family. Homodimer. Mg(2+) serves as cofactor.

The protein resides in the cytoplasm. The catalysed reaction is IMP + L-aspartate + GTP = N(6)-(1,2-dicarboxyethyl)-AMP + GDP + phosphate + 2 H(+). It functions in the pathway purine metabolism; AMP biosynthesis via de novo pathway; AMP from IMP: step 1/2. Its function is as follows. Plays an important role in the de novo pathway and in the salvage pathway of purine nucleotide biosynthesis. Catalyzes the first committed step in the biosynthesis of AMP from IMP. This is Adenylosuccinate synthetase from Drosophila pseudoobscura pseudoobscura (Fruit fly).